Consider the following 45-residue polypeptide: Osteocalcin (45 aa).

The Gla domain occupies 1–44 (AGTAXGDLTPFQLESLREVCEVNLACEHMADTXGIVAAYTAYYG). Positions 14, 18, 21, and 27 each coordinate Ca(2+). E14, E18, and E21 each carry 4-carboxyglutamate. Residues C20 and C26 are joined by a disulfide bond.

Belongs to the osteocalcin/matrix Gla protein family. In terms of processing, gamma-carboxyglutamate residues are formed by vitamin K dependent carboxylation by GGCX. These residues are essential for the binding of calcium.

It is found in the secreted. In terms of biological role, the carboxylated form is one of the main organic components of the bone matrix, which constitutes 1-2% of the total bone protein. The carboxylated form binds strongly to apatite and calcium. The polypeptide is Osteocalcin (bglap) (Danio rerio (Zebrafish)).